A 437-amino-acid polypeptide reads, in one-letter code: Chromosomal replication initiator protein DnaA (437 aa).

Positions 1-72 are domain I, interacts with DnaA modulators; that stretch reads MEQFNAFKSL…ESLYEGIKSV (72 aa). Residues 72–99 form a domain II region; sequence VNFVNEQDFFFNLAKLEENSRDTLYQNS. The domain III, AAA+ region stretch occupies residues 100–320; sequence GLSKNYTFQN…GIATKLLFFA (221 aa). Positions 144, 146, 147, and 148 each coordinate ATP. Positions 321–437 are domain IV, binds dsDNA; that stretch reads KTSKQNLINT…LRDVITSLVI (117 aa).

This sequence belongs to the DnaA family. As to quaternary structure, oligomerizes as a right-handed, spiral filament on DNA at oriC.

The protein localises to the cytoplasm. Functionally, plays an essential role in the initiation and regulation of chromosomal replication. ATP-DnaA binds to the origin of replication (oriC) to initiate formation of the DNA replication initiation complex once per cell cycle. Binds the DnaA box (a 9 base pair repeat at the origin) and separates the double-stranded (ds)DNA. Forms a right-handed helical filament on oriC DNA; dsDNA binds to the exterior of the filament while single-stranded (ss)DNA is stabiized in the filament's interior. The ATP-DnaA-oriC complex binds and stabilizes one strand of the AT-rich DNA unwinding element (DUE), permitting loading of DNA polymerase. After initiation quickly degrades to an ADP-DnaA complex that is not apt for DNA replication. Binds acidic phospholipids. This is Chromosomal replication initiator protein DnaA from Mycoplasma genitalium (strain ATCC 33530 / DSM 19775 / NCTC 10195 / G37) (Mycoplasmoides genitalium).